We begin with the raw amino-acid sequence, 134 residues long: Ribosome-binding factor A (134 aa).

It belongs to the RbfA family. As to quaternary structure, monomer. Binds 30S ribosomal subunits, but not 50S ribosomal subunits or 70S ribosomes.

The protein resides in the cytoplasm. One of several proteins that assist in the late maturation steps of the functional core of the 30S ribosomal subunit. Associates with free 30S ribosomal subunits (but not with 30S subunits that are part of 70S ribosomes or polysomes). Required for efficient processing of 16S rRNA. May interact with the 5'-terminal helix region of 16S rRNA. The protein is Ribosome-binding factor A of Parasynechococcus marenigrum (strain WH8102).